We begin with the raw amino-acid sequence, 672 residues long: Putative sodium/calcium exchanger 7 (672 aa).

The N-terminal stretch at 1–23 (MAQPSILFSLTLIFLISIKSCDA) is a signal peptide. 12 helical membrane-spanning segments follow: residues 88-108 (VILI…VSSA), 130-150 (VAGV…GSIA), 164-184 (LGEL…TIIL), 196-216 (IRDL…FVFY), 221-241 (LWMP…VIGA), 451-471 (LTLL…QFFL), 479-499 (PGLW…IMVF), 522-542 (IAWI…LGVV), 551-571 (GLTI…VSVV), 581-601 (AAAI…PFTI), 620-640 (LILF…VQKF), and 649-669 (VLIS…TGVL).

Belongs to the Ca(2+):cation antiporter (CaCA) (TC 2.A.19) family.

Its subcellular location is the membrane. This chain is Putative sodium/calcium exchanger 7 (ncx-7), found in Caenorhabditis elegans.